A 175-amino-acid chain; its full sequence is Major oleosin NAP-II (175 aa).

Residues 1 to 47 are polar; the sequence is RRDQYPRDRDQYSMIGRDRDKYSMIGRDRDQYNMYGRDYSKSRQIAK. 2 consecutive repeats follow at residues 17 to 26 and 27 to 36; these read RDRDKYSMIG and RDRDQYNMYG. The interval 48 to 119 is hydrophobic; that stretch reads AVTAVTAGGS…AAITVFSWIY (72 aa). 3 consecutive transmembrane segments (helical) span residues 56-76, 78-98, and 99-119; these read GSLLVLSSLTLVGTVIALTVA, PLLVIFSPILVPALITVALLI, and TGFLSSGGFGIAAITVFSWIY. A disordered region spans residues 151–175; the sequence is AQYYGQQQTGGEDDRDRTRGTQHTT.

This sequence belongs to the oleosin family.

It is found in the lipid droplet. The protein localises to the membrane. In terms of biological role, may have a structural role to stabilize the lipid body during desiccation of the seed by preventing coalescence of the oil. Probably interacts with both lipid and phospholipid moieties of lipid bodies. May also provide recognition signals for specific lipase anchorage in lipolysis during seedling growth. This chain is Major oleosin NAP-II, found in Brassica napus (Rape).